A 208-amino-acid polypeptide reads, in one-letter code: Thymidylate kinase (208 aa).

10-17 is a binding site for ATP; it reads GPDGSGKT.

It belongs to the thymidylate kinase family.

It carries out the reaction dTMP + ATP = dTDP + ADP. Phosphorylation of dTMP to form dTDP in both de novo and salvage pathways of dTTP synthesis. In Listeria welshimeri serovar 6b (strain ATCC 35897 / DSM 20650 / CCUG 15529 / CIP 8149 / NCTC 11857 / SLCC 5334 / V8), this protein is Thymidylate kinase.